Here is a 309-residue protein sequence, read N- to C-terminus: Glutamyl-Q tRNA(Asp) synthetase (309 aa).

L-glutamate is bound by residues 8–12 (RFSPS) and E44. The 'HIGH' region signature appears at 11–21 (PSPTGPLHAGS). Residues C100, C102, Y126, and C130 each coordinate Zn(2+). L-glutamate-binding residues include Y205 and R223. The short motif at 261–265 (KLSKQ) is the 'KMSKS' region element. Residue K264 coordinates ATP.

Belongs to the class-I aminoacyl-tRNA synthetase family. GluQ subfamily. Requires Zn(2+) as cofactor.

Functionally, catalyzes the tRNA-independent activation of glutamate in presence of ATP and the subsequent transfer of glutamate onto a tRNA(Asp). Glutamate is transferred on the 2-amino-5-(4,5-dihydroxy-2-cyclopenten-1-yl) moiety of the queuosine in the wobble position of the QUC anticodon. This is Glutamyl-Q tRNA(Asp) synthetase from Albidiferax ferrireducens (strain ATCC BAA-621 / DSM 15236 / T118) (Rhodoferax ferrireducens).